The sequence spans 397 residues: Serine/threonine-protein kinase 17A (397 aa).

A disordered region spans residues 1-23; sequence MIPLEKPGSGGSPSAAASGSGPG. Residue Ser-9 is modified to Phosphoserine. The 261-residue stretch at 44–304 folds into the Protein kinase domain; it reads LSPGRELGRG…AEECLKHPWL (261 aa). ATP is bound by residues 50-58 and Lys-73; that span reads LGRGKFAVV. Residue Asp-169 is the Proton acceptor of the active site.

It belongs to the protein kinase superfamily. CAMK Ser/Thr protein kinase family. DAP kinase subfamily. Post-translationally, autophosphorylated. As to expression, highly expressed in bone marrow. Lower levels in brain, heart, lung, liver and kidney.

Its subcellular location is the nucleus. The catalysed reaction is L-seryl-[protein] + ATP = O-phospho-L-seryl-[protein] + ADP + H(+). It carries out the reaction L-threonyl-[protein] + ATP = O-phospho-L-threonyl-[protein] + ADP + H(+). Its activity is regulated as follows. Inhibited by thiazolidinedione-type compounds: inhibited by furan- and pyridone- thiazolidinediones. Functionally, acts as a positive regulator of apoptosis. May also act as a regulator of cellular reactive oxygen species. The polypeptide is Serine/threonine-protein kinase 17A (STK17A) (Oryctolagus cuniculus (Rabbit)).